The chain runs to 405 residues: Tryptophan synthase beta chain (405 aa).

An N6-(pyridoxal phosphate)lysine modification is found at lysine 98.

It belongs to the TrpB family. As to quaternary structure, tetramer of two alpha and two beta chains. Pyridoxal 5'-phosphate serves as cofactor.

It carries out the reaction (1S,2R)-1-C-(indol-3-yl)glycerol 3-phosphate + L-serine = D-glyceraldehyde 3-phosphate + L-tryptophan + H2O. It participates in amino-acid biosynthesis; L-tryptophan biosynthesis; L-tryptophan from chorismate: step 5/5. Its function is as follows. The beta subunit is responsible for the synthesis of L-tryptophan from indole and L-serine. In Xanthomonas oryzae pv. oryzae (strain PXO99A), this protein is Tryptophan synthase beta chain.